The primary structure comprises 304 residues: Putative S-adenosyl-L-methionine-dependent methyltransferase MAV_4236 (304 aa).

Residues Asp129 and 158–159 (DL) each bind S-adenosyl-L-methionine.

Belongs to the UPF0677 family.

Exhibits S-adenosyl-L-methionine-dependent methyltransferase activity. The sequence is that of Putative S-adenosyl-L-methionine-dependent methyltransferase MAV_4236 from Mycobacterium avium (strain 104).